Consider the following 543-residue polypeptide: Allantoate permease (543 aa).

At 1–80 the chain is on the cytoplasmic side; that stretch reads MSADASTNSN…PEEDRKLRWK (80 aa). The helical transmembrane segment at 81–97 threads the bilayer; sequence IDYCMFPLMCILYAVQF. The Extracellular portion of the chain corresponds to 98–123; that stretch reads MDKISTSSAAVMGLRTDLKMHGDQYS. Residues 124–145 traverse the membrane as a helical segment; it reads WVTSAFYFGYLFMNLGPVQFIF. Over 146–154 the chain is Cytoplasmic; that stretch reads QRTSHMSKM. Residues 155–171 form a helical membrane-spanning segment; the sequence is LAVFIVIWGMLLALHAA. At 172 to 178 the chain is on the extracellular side; it reads PTVKYPS. Residues 179–200 traverse the membrane as a helical segment; the sequence is FIVLRVLLGCAESVVTPCFTII. Residues 201–213 lie on the Cytoplasmic side of the membrane; sequence TAQYWKTEEQFTR. A helical membrane pass occupies residues 214–237; the sequence is VSIWFGMNGLGSILINAIAYGVYI. Over 238–248 the chain is Extracellular; that stretch reads HQDSYAIKGWR. A helical transmembrane segment spans residues 249-269; it reads TLFVITGVITIFIGILIFLWI. The Cytoplasmic portion of the chain corresponds to 270–317; sequence PDDPSKARFLSKREKLMVVQRIRSNQQGFGNHEIKKYQIIEALKDVRT. Residues 318 to 342 traverse the membrane as a helical segment; that stretch reads WLYFLFTVSSNIPNGGISSFMSILL. Residues 343–352 lie on the Extracellular side of the membrane; it reads NSDFGYSSKE. Residues 353 to 377 traverse the membrane as a helical segment; that stretch reads TLLMGLPTGAVELVGCPLFGILAVY. Over 378–389 the chain is Cytoplasmic; the sequence is AANKKIPFWKYK. Residues 390–411 form a helical membrane-spanning segment; it reads LSWAIFAAVLALIASCMLGFAT. Residues 412 to 417 lie on the Extracellular side of the membrane; it reads NSKKAR. The helical transmembrane segment at 418-435 threads the bilayer; the sequence is LAGAYLWYISPVSFICVL. Residues 436-453 are Cytoplasmic-facing; the sequence is SNISANSSGYSKKWTVSS. A helical transmembrane segment spans residues 454-472; the sequence is INLVAYAAANLAGPQTFIA. Residues 473-482 are Extracellular-facing; the sequence is KQAPKYHGAK. Residues 483–504 form a helical membrane-spanning segment; it reads VAMVVCYAVMIVLLSILLIVNL. At 505–543 the chain is on the cytoplasmic side; sequence RENKRRDKIAAERGFPEETENLEFSDLTDFENPNFRYTL.

It belongs to the major facilitator superfamily. Allantoate permease family.

The protein resides in the membrane. Its function is as follows. Component of the allantoate transport system. The sequence is that of Allantoate permease (DAL5) from Saccharomyces cerevisiae (strain ATCC 204508 / S288c) (Baker's yeast).